The primary structure comprises 823 residues: Lon protease (823 aa).

One can recognise a Lon N-terminal domain in the interval 51 to 246 (IPILPLRNMV…RLLFILNREY (196 aa)). 397–404 (GPPGVGKT) provides a ligand contact to ATP. One can recognise a Lon proteolytic domain in the interval 633–815 (NDYAGVVTGL…QQVVDLALLR (183 aa)). Active-site residues include Ser721 and Lys764.

Belongs to the peptidase S16 family. Homohexamer. Organized in a ring with a central cavity.

It is found in the cytoplasm. It catalyses the reaction Hydrolysis of proteins in presence of ATP.. ATP-dependent serine protease that mediates the selective degradation of mutant and abnormal proteins as well as certain short-lived regulatory proteins. Required for cellular homeostasis and for survival from DNA damage and developmental changes induced by stress. Degrades polypeptides processively to yield small peptide fragments that are 5 to 10 amino acids long. Binds to DNA in a double-stranded, site-specific manner. The polypeptide is Lon protease (Parabacteroides distasonis (strain ATCC 8503 / DSM 20701 / CIP 104284 / JCM 5825 / NCTC 11152)).